Consider the following 245-residue polypeptide: tRNA1(Val) (adenine(37)-N6)-methyltransferase (245 aa).

It belongs to the methyltransferase superfamily. tRNA (adenine-N(6)-)-methyltransferase family.

It localises to the cytoplasm. It carries out the reaction adenosine(37) in tRNA1(Val) + S-adenosyl-L-methionine = N(6)-methyladenosine(37) in tRNA1(Val) + S-adenosyl-L-homocysteine + H(+). Specifically methylates the adenine in position 37 of tRNA(1)(Val) (anticodon cmo5UAC). The sequence is that of tRNA1(Val) (adenine(37)-N6)-methyltransferase from Salmonella arizonae (strain ATCC BAA-731 / CDC346-86 / RSK2980).